We begin with the raw amino-acid sequence, 966 residues long: Replication protein 1a (966 aa).

The methyltransferase stretch occupies residues 49-381 (RNKLSVAECD…VIINGQSIMS (333 aa)). The region spanning 71 to 261 (NLTHEYTAPH…HDWKNLGSFL (191 aa)) is the Alphavirus-like MT domain. The 156-residue stretch at 660–815 (DKTCSCANAK…NIEYDKRDIV (156 aa)) folds into the (+)RNA virus helicase ATP-binding domain. The segment at 687–951 (MVDGVAGCGK…TRHKRTFEYL (265 aa)) is ATP-dependent helicase. 690 to 697 (GVAGCGKT) provides a ligand contact to ATP. Residues 816–966 (SKTFRCPQDV…GGDLISFYVT (151 aa)) enclose the (+)RNA virus helicase C-terminal domain.

The protein belongs to the bromoviridae replication protein 1a family.

It is found in the host endoplasmic reticulum membrane. Its function is as follows. Involved in the virus replication. Contains a helicase domain and a methyltransferase domain. The methyltransferase domain is probably involved in viral RNA capping. The sequence is that of Replication protein 1a from Vicia faba (Broad bean).